Reading from the N-terminus, the 543-residue chain is Phosphoenolpyruvate carboxykinase (ATP) (543 aa).

244–251 (GLSGTGKT) provides a ligand contact to ATP.

Belongs to the phosphoenolpyruvate carboxykinase (ATP) family.

The catalysed reaction is oxaloacetate + ATP = phosphoenolpyruvate + ADP + CO2. The protein operates within carbohydrate biosynthesis; gluconeogenesis. The polypeptide is Phosphoenolpyruvate carboxykinase (ATP) (PCK1) (Kluyveromyces lactis (strain ATCC 8585 / CBS 2359 / DSM 70799 / NBRC 1267 / NRRL Y-1140 / WM37) (Yeast)).